The chain runs to 795 residues: Serine/threonine-protein kinase MARK1 (795 aa).

Residues 1 to 41 (MSARTPLPTVNERDTENHTSVDGYTETHIPPAKSSSRQNLP) are disordered. Threonine 5 carries the phosphothreonine modification. One can recognise a Protein kinase domain in the interval 60 to 311 (YRLQKTIGKG…LEQIMKDRWM (252 aa)). Residues 66–74 (IGKGNFAKV) and lysine 89 each bind ATP. Aspartate 182 serves as the catalytic Proton acceptor. The residue at position 208 (threonine 208) is a Phosphothreonine. Position 215 is a phosphothreonine; by LKB1 and TAOK1 (threonine 215). Serine 219 is subject to Phosphoserine; by GSK3-beta. Positions 329 to 370 (DLSDAKRIDIMVTMGFARDEINDALVSQKYDEVMATYILLGR) constitute a UBA domain. 2 disordered regions span residues 377-498 (GGES…SGGS) and 518-699 (QNGR…KPRS). Phosphoserine is present on residues serine 382, serine 390, serine 393, serine 403, serine 423, and serine 444. Polar residues predominate over residues 387–403 (CQRSRPSSDLNNSTLQS). Over residues 447-459 (SEQKEEWGKDTAR) the composition is skewed to basic and acidic residues. Positions 462–473 (GSTTVGSKSEVT) are enriched in polar residues. Serine 475 carries the post-translational modification Phosphoserine. The span at 486–495 (TASPSNNVYS) shows a compositional bias: polar residues. 2 stretches are compositionally biased toward low complexity: residues 523–547 (SSLTEMSASSMSSAGSTVASAGPSA) and 585–599 (PAASPSAHSISASTP). Serine 588 carries the post-translational modification Phosphoserine. Threonine 613 carries the post-translational modification Phosphothreonine; by PKC/PRKCZ. Residues 647-657 (GTSTGIISKIT) are compositionally biased toward polar residues. Basic and acidic residues-rich tracts occupy residues 661–676 (VRRDPSEGEASGRADT) and 683–697 (DPKERDKDEGKEAKP). Serine 666 carries the phosphoserine modification. Residues 746–795 (DARQDSLVQWEMEVCKLPRLSLNGVRFKRISGTSIAFKNIASKIANELKL) enclose the KA1 domain.

The protein belongs to the protein kinase superfamily. CAMK Ser/Thr protein kinase family. SNF1 subfamily. As to quaternary structure, interacts with MAPT/TAU. Mg(2+) serves as cofactor. Phosphorylated at Thr-215 by STK11/LKB1 in complex with STE20-related adapter-alpha (STRADA) pseudo kinase and CAB39. Phosphorylation at Thr-215 by TAOK1 activates the kinase activity, leading to phosphorylation and detachment of MAPT/TAU from microtubules. Phosphorylation at Ser-219 by GSK3-beta (GSK3B) inhibits the kinase activity. Phosphorylation at Thr-613 by PRKCZ/aPKC in polarized epithelial cells inhibits the kinase activity.

The protein resides in the cell membrane. It localises to the cytoplasm. Its subcellular location is the cytoskeleton. It is found in the cell projection. The protein localises to the dendrite. It catalyses the reaction L-seryl-[protein] + ATP = O-phospho-L-seryl-[protein] + ADP + H(+). It carries out the reaction L-threonyl-[protein] + ATP = O-phospho-L-threonyl-[protein] + ADP + H(+). The enzyme catalyses L-seryl-[tau protein] + ATP = O-phospho-L-seryl-[tau protein] + ADP + H(+). The catalysed reaction is L-threonyl-[tau protein] + ATP = O-phospho-L-threonyl-[tau protein] + ADP + H(+). Its activity is regulated as follows. Inhibited by phosphorylation at Ser-219. Activated by phosphorylation on Thr-215. In terms of biological role, serine/threonine-protein kinase. Involved in cell polarity and microtubule dynamics regulation. Phosphorylates DCX, MAP2 and MAP4. Phosphorylates the microtubule-associated protein MAPT/TAU. Involved in cell polarity by phosphorylating the microtubule-associated proteins MAP2, MAP4 and MAPT/TAU at KXGS motifs, causing detachment from microtubules, and their disassembly. Involved in the regulation of neuronal migration through its dual activities in regulating cellular polarity and microtubule dynamics, possibly by phosphorylating and regulating DCX. Also acts as a positive regulator of the Wnt signaling pathway, probably by mediating phosphorylation of dishevelled proteins (DVL1, DVL2 and/or DVL3). The protein is Serine/threonine-protein kinase MARK1 of Mus musculus (Mouse).